The chain runs to 147 residues: Protein-export protein SecB (147 aa).

Belongs to the SecB family. As to quaternary structure, homotetramer, a dimer of dimers. One homotetramer interacts with 1 SecA dimer.

It is found in the cytoplasm. In terms of biological role, one of the proteins required for the normal export of preproteins out of the cell cytoplasm. It is a molecular chaperone that binds to a subset of precursor proteins, maintaining them in a translocation-competent state. It also specifically binds to its receptor SecA. The protein is Protein-export protein SecB of Neisseria gonorrhoeae (strain ATCC 700825 / FA 1090).